An 80-amino-acid polypeptide reads, in one-letter code: Translation initiation factor IF-1 (80 aa).

Residues 6-80 (RKQEHEKERG…LTRGRIVYRL (75 aa)) form the S1-like domain.

Belongs to the IF-1 family. In terms of assembly, component of the 30S ribosomal translation pre-initiation complex which assembles on the 30S ribosome in the order IF-2 and IF-3, IF-1 and N-formylmethionyl-tRNA(fMet); mRNA recruitment can occur at any time during PIC assembly.

The protein resides in the cytoplasm. One of the essential components for the initiation of protein synthesis. Stabilizes the binding of IF-2 and IF-3 on the 30S subunit to which N-formylmethionyl-tRNA(fMet) subsequently binds. Helps modulate mRNA selection, yielding the 30S pre-initiation complex (PIC). Upon addition of the 50S ribosomal subunit IF-1, IF-2 and IF-3 are released leaving the mature 70S translation initiation complex. The chain is Translation initiation factor IF-1 from Aquifex aeolicus (strain VF5).